The following is an 818-amino-acid chain: Dapper 1-A (818 aa).

A compositionally biased stretch (pro residues) spans 1–10 (MKPIPSPEPP). Disordered regions lie at residues 1–30 (MKPI…WERH), 60–80 (VLSP…PRSD), 122–144 (IDSE…LSDG), 455–486 (NVTP…SALL), and 510–530 (ESSS…SSSQ). The segment at 1-337 (MKPIPSPEPP…PVRTNKPRTS (337 aa)) is interaction with tcf7l1-A. Basic and acidic residues predominate over residues 21–30 (DKGEAEWERH). A coiled-coil region spans residues 79–130 (SDEQKLLEENISLLKKQLNCLRKRDAGLLSQLHELDKQINDLKIDSEKTEET). Positions 122 to 132 (IDSEKTEETDS) are enriched in basic and acidic residues. Over residues 455–485 (NVTPNAPANLPNASSSVCNGSPRESTQNSAL) the composition is skewed to polar residues. Positions 512–524 (SSFEERPPLDFKS) are enriched in basic and acidic residues. Positions 815–818 (MTTV) match the PDZ-binding motif.

The protein belongs to the dapper family. As to quaternary structure, interacts with dbf4 and tcf7l1-A. Interacts with dvl2/dsh via the C-terminus. As to expression, expressed in the animal and dorsal marginal regions at late blastula and early gastrula stages. Expressed predominantly in the anterior neural plate at neurulation. Expressed mainly in the ectodermal placodes, including the eye anlagen and the otic vesicle, at later stages of development.

It is found in the cytoplasm. The protein resides in the nucleus. Functionally, involved in regulation of intracellular signaling pathways during development. Specifically thought to play a role in canonical and/or non-canonical Wnt signaling pathways through interaction with DSH (Dishevelled) family proteins. Binds to dvl2/dsh and impedes the degradation of beta-catenin (ctnnb1-A and possibly ctnnb1-B), thereby enhancing the transcriptional activation of target genes of the Wnt signaling pathway. Also promotes catenin delta/ctnnd1 stability which in turn promotes zbtb33/kaiso sequestration and thus is involved in the regulation of zbtb33/kaiso-mediated transcriptional repression. May also bind to and directly stimulate the transcriptional activity of tcf7l1-A. Required for eye development and neural patterning. This is Dapper 1-A (dact1-a) from Xenopus laevis (African clawed frog).